Reading from the N-terminus, the 430-residue chain is DD-carboxypeptidase/endopeptidase Mpg (430 aa).

Residues His295, Asp299, and His375 each coordinate Zn(2+).

This sequence belongs to the peptidase M23B family. Monomer. The cofactor is Zn(2+). Post-translationally, likely to be synthesized as a proenzyme. The cleavage of the N-terminal domain is probably required for the activation of the enzyme.

It localises to the cell outer membrane. Functionally, has both endopeptidase and DD-carboxypeptidase activities. Degrades cell wall peptidoglycan (PG) to allow consummate expression of pili. The chain is DD-carboxypeptidase/endopeptidase Mpg from Neisseria meningitidis serogroup B (strain ATCC 13091 / M2091).